The following is a 164-amino-acid chain: Cyanate hydratase (164 aa).

Residues Arg90, Glu93, and Ser116 contribute to the active site.

Belongs to the cyanase family.

The catalysed reaction is cyanate + hydrogencarbonate + 3 H(+) = NH4(+) + 2 CO2. Its function is as follows. Catalyzes the reaction of cyanate with bicarbonate to produce ammonia and carbon dioxide. The sequence is that of Cyanate hydratase from Vitis vinifera (Grape).